We begin with the raw amino-acid sequence, 170 residues long: uncharacterized protein (170 aa).

The region spanning 8-167 (LLIREFEFKD…DEYYYAILEE (160 aa)) is the N-acetyltransferase domain.

The protein belongs to the acetyltransferase family.

This is an uncharacterized protein from Bacillus subtilis (strain 168).